Here is a 367-residue protein sequence, read N- to C-terminus: MSLSDQVLAVNDDLPIRTDKPVHSGKVRSVYWLTEEDSRRLIKEKGYNVAPDAPLAIMVISDRISAFDCIWHGEGDLKGIPGKGAALNAISNHWFQLFKDNGLADSHILDIPHPFVWIVQKAKPVMIEAICRQYITGSMWRAYTQGEREFCGITLPERLEKDEQLAELLLTPSTKGILKGIDGVPEVDDVNITRKNIEDNYDKFNFSCIEDIATYEKLLKEGFAVIAKALNKIDQIFVDTKFEFGYVEDAQGNEKLIYMDEVGTPDSSRIWDTKAYRSGHIIENSKEGFRQFLLNHFPEPDILLNKNRMEERFALAEENALPLEAMMDLSKTYLDIAAKITGAPITLSDNPKAEIIKVLKEEYQLVD.

Belongs to the SAICAR synthetase family.

It carries out the reaction 5-amino-1-(5-phospho-D-ribosyl)imidazole-4-carboxylate + L-aspartate + ATP = (2S)-2-[5-amino-1-(5-phospho-beta-D-ribosyl)imidazole-4-carboxamido]succinate + ADP + phosphate + 2 H(+). It participates in purine metabolism; IMP biosynthesis via de novo pathway; 5-amino-1-(5-phospho-D-ribosyl)imidazole-4-carboxamide from 5-amino-1-(5-phospho-D-ribosyl)imidazole-4-carboxylate: step 1/2. This is Phosphoribosylaminoimidazole-succinocarboxamide synthase from Aliivibrio fischeri (strain ATCC 700601 / ES114) (Vibrio fischeri).